Reading from the N-terminus, the 180-residue chain is Der GTPase-activating protein YihI (180 aa).

Disordered stretches follow at residues 1–87 (MSRK…MTKQ) and 142–180 (GLLE…DYKG). The span at 23-32 (NRTESDVEGR) shows a compositional bias: basic and acidic residues. The span at 33-43 (LRKRAKKRKGL) shows a compositional bias: basic residues. Over residues 51–68 (EVNEQKKQSSEQNRDPRL) the composition is skewed to basic and acidic residues. The span at 165-180 (DLLADFDDINFDDYKG) shows a compositional bias: acidic residues.

This sequence belongs to the YihI family. Interacts with Der.

Functionally, a GTPase-activating protein (GAP) that modifies Der/EngA GTPase function. May play a role in ribosome biogenesis. The protein is Der GTPase-activating protein YihI of Vibrio parahaemolyticus serotype O3:K6 (strain RIMD 2210633).